The following is a 323-amino-acid chain: DNA-directed RNA polymerase subunit alpha (323 aa).

Residues 1-225 (MLDIAMPKIE…QYSQTIADFN (225 aa)) are alpha N-terminal domain (alpha-NTD). Residues 246–323 (IYDTPIEELD…SHAARAEIEG (78 aa)) form an alpha C-terminal domain (alpha-CTD) region.

The protein belongs to the RNA polymerase alpha chain family. Homodimer. The RNAP catalytic core consists of 2 alpha, 1 beta, 1 beta' and 1 omega subunit. When a sigma factor is associated with the core the holoenzyme is formed, which can initiate transcription.

It carries out the reaction RNA(n) + a ribonucleoside 5'-triphosphate = RNA(n+1) + diphosphate. DNA-dependent RNA polymerase catalyzes the transcription of DNA into RNA using the four ribonucleoside triphosphates as substrates. The sequence is that of DNA-directed RNA polymerase subunit alpha from Roseiflexus sp. (strain RS-1).